Reading from the N-terminus, the 729-residue chain is Fatty acid oxidation complex subunit alpha (729 aa).

The interval 1 to 189 (MLYKGDTLYL…KIGLVDGVVK (189 aa)) is enoyl-CoA hydratase/isomerase. Asp-296 contributes to the substrate binding site. Residues 311 to 729 (ETPKQAAVLG…ARPVGDLKTA (419 aa)) are 3-hydroxyacyl-CoA dehydrogenase. NAD(+) is bound by residues Met-324, Asp-343, 400-402 (VVE), Lys-407, and Ser-429. His-450 acts as the For 3-hydroxyacyl-CoA dehydrogenase activity in catalysis. Asn-453 serves as a coordination point for NAD(+). Asn-500 and Tyr-660 together coordinate substrate. Residues 708–729 (RHNEPYYPPVEPARPVGDLKTA) are disordered.

This sequence in the N-terminal section; belongs to the enoyl-CoA hydratase/isomerase family. The protein in the C-terminal section; belongs to the 3-hydroxyacyl-CoA dehydrogenase family. As to quaternary structure, heterotetramer of two alpha chains (FadB) and two beta chains (FadA).

The enzyme catalyses a (3S)-3-hydroxyacyl-CoA + NAD(+) = a 3-oxoacyl-CoA + NADH + H(+). The catalysed reaction is a (3S)-3-hydroxyacyl-CoA = a (2E)-enoyl-CoA + H2O. It carries out the reaction a 4-saturated-(3S)-3-hydroxyacyl-CoA = a (3E)-enoyl-CoA + H2O. It catalyses the reaction (3S)-3-hydroxybutanoyl-CoA = (3R)-3-hydroxybutanoyl-CoA. The enzyme catalyses a (3Z)-enoyl-CoA = a 4-saturated (2E)-enoyl-CoA. The catalysed reaction is a (3E)-enoyl-CoA = a 4-saturated (2E)-enoyl-CoA. It functions in the pathway lipid metabolism; fatty acid beta-oxidation. In terms of biological role, involved in the aerobic and anaerobic degradation of long-chain fatty acids via beta-oxidation cycle. Catalyzes the formation of 3-oxoacyl-CoA from enoyl-CoA via L-3-hydroxyacyl-CoA. It can also use D-3-hydroxyacyl-CoA and cis-3-enoyl-CoA as substrate. The protein is Fatty acid oxidation complex subunit alpha of Escherichia coli O8 (strain IAI1).